The primary structure comprises 112 residues: Omega-agatoxin-1A (112 aa).

A signal peptide spans 1-19 (MMKFVVFLACLFVAAHSFA). A propeptide spanning residues 20–36 (VEGEEEYFEAEVPELER) is cleaved from the precursor. The propeptide at 103–109 (RSEESER) is glu-rich.

It belongs to the neurotoxin 04 (omega-agtx) family. 01 (type I omega-agtx) subfamily. As to quaternary structure, heterodimer of two subunits, a major chain and a minor chain, linked by a disulfide bond. In terms of processing, proteolytically processed to yield the major and the minor chains. In terms of tissue distribution, expressed by the venom gland.

It localises to the secreted. Its function is as follows. Omega-agatoxins are antagonists of voltage-gated calcium channels. They block insect neuromuscular transmission presynaptically. This toxin is a blocker of L-type calcium channels (Cav/CACNA1). This Agelenopsis aperta (North American funnel-web spider) protein is Omega-agatoxin-1A.